Reading from the N-terminus, the 158-residue chain is MRIGHGFDAHRFGSTGKLILGGVEIPHEQGLIAHSDGDVVIHALCDALLGGAALGDIGRHFPDTSAEFKNADSQKLLHRVMVLLKEHGFKVSNGDMTIIAQIPKLAPYLPAMRETLALALGLPLQRFNIKATTTERMGYIGRAEGIAAHAVVLLLEEQ.

Residues Asp-8 and His-10 each coordinate a divalent metal cation. 4-CDP-2-C-methyl-D-erythritol 2-phosphate contacts are provided by residues 8–10 (DAH) and 34–35 (HS). Residue His-42 participates in a divalent metal cation binding. Residues 56–58 (DIG), 132–135 (TTTE), and Arg-142 each bind 4-CDP-2-C-methyl-D-erythritol 2-phosphate.

The protein belongs to the IspF family. In terms of assembly, homotrimer. A divalent metal cation serves as cofactor.

It carries out the reaction 4-CDP-2-C-methyl-D-erythritol 2-phosphate = 2-C-methyl-D-erythritol 2,4-cyclic diphosphate + CMP. It functions in the pathway isoprenoid biosynthesis; isopentenyl diphosphate biosynthesis via DXP pathway; isopentenyl diphosphate from 1-deoxy-D-xylulose 5-phosphate: step 4/6. Involved in the biosynthesis of isopentenyl diphosphate (IPP) and dimethylallyl diphosphate (DMAPP), two major building blocks of isoprenoid compounds. Catalyzes the conversion of 4-diphosphocytidyl-2-C-methyl-D-erythritol 2-phosphate (CDP-ME2P) to 2-C-methyl-D-erythritol 2,4-cyclodiphosphate (ME-CPP) with a corresponding release of cytidine 5-monophosphate (CMP). This chain is 2-C-methyl-D-erythritol 2,4-cyclodiphosphate synthase, found in Nitrosococcus oceani (strain ATCC 19707 / BCRC 17464 / JCM 30415 / NCIMB 11848 / C-107).